Consider the following 311-residue polypeptide: HPr kinase/phosphorylase (311 aa).

Catalysis depends on residues His138 and Lys159. Gly153–Ser160 is an ATP binding site. Ser160 lines the Mg(2+) pocket. Asp177 serves as the catalytic Proton acceptor; for phosphorylation activity. Proton donor; for dephosphorylation activity. The segment at Leu201–Asn210 is important for the catalytic mechanism of both phosphorylation and dephosphorylation. Glu202 contributes to the Mg(2+) binding site. Residue Arg243 is part of the active site. An important for the catalytic mechanism of dephosphorylation region spans residues Pro264 to Arg269.

Belongs to the HPrK/P family. Homohexamer. The cofactor is Mg(2+).

It catalyses the reaction [HPr protein]-L-serine + ATP = [HPr protein]-O-phospho-L-serine + ADP + H(+). The enzyme catalyses [HPr protein]-O-phospho-L-serine + phosphate + H(+) = [HPr protein]-L-serine + diphosphate. In terms of biological role, catalyzes the ATP- as well as the pyrophosphate-dependent phosphorylation of a specific serine residue in HPr, a phosphocarrier protein of the phosphoenolpyruvate-dependent sugar phosphotransferase system (PTS). HprK/P also catalyzes the pyrophosphate-producing, inorganic phosphate-dependent dephosphorylation (phosphorolysis) of seryl-phosphorylated HPr (P-Ser-HPr). The two antagonistic activities of HprK/P are regulated by several intracellular metabolites, which change their concentration in response to the absence or presence of rapidly metabolisable carbon sources (glucose, fructose, etc.) in the growth medium. Also phosphorylates/dephosphorylates the HPr-like catabolite repression protein crh on a specific serine residue. Therefore, by controlling the phosphorylation state of HPr and crh, HPrK/P is a sensor enzyme that plays a major role in the regulation of carbon metabolism and sugar transport: it mediates carbon catabolite repression (CCR), and regulates PTS-catalyzed carbohydrate uptake and inducer exclusion. The chain is HPr kinase/phosphorylase from Geobacillus kaustophilus (strain HTA426).